Reading from the N-terminus, the 57-residue chain is COP9 signalosome complex subunit 9 (57 aa).

Thr-26 carries the post-translational modification Phosphothreonine.

Belongs to the CSN9 family. In terms of assembly, component of the CSN complex, composed of COPS1/GPS1, COPS2, COPS3, COPS4, COPS5, COPS6, COPS7 (COPS7A or COPS7B), COPS8 and COPS9. In the complex, it interacts directly with COPS3, COPS5 and COPS6.

It is found in the nucleus. It localises to the cytoplasm. The protein resides in the nucleoplasm. Component of the COP9 signalosome complex (CSN), a complex involved in various cellular and developmental processes. The CSN complex is an essential regulator of the ubiquitin (Ubl) conjugation pathway by mediating the deneddylation of the cullin subunits of SCF-type E3 ligase complexes, leading to decrease the Ubl ligase activity of SCF-type complexes such as SCF, CSA or DDB2. The complex is also involved in phosphorylation of p53/TP53, c-jun/JUN, IkappaBalpha/NFKBIA, ITPK1 and IRF8/ICSBP, possibly via its association with CK2 and PKD kinases. CSN-dependent phosphorylation of TP53 and JUN promotes and protects degradation by the Ubl system, respectively. Plays a role in cell proliferation. In Bos taurus (Bovine), this protein is COP9 signalosome complex subunit 9.